The primary structure comprises 336 residues: MAPARENVSLFFKLYCLTVMTLVAAAYTVALRYTRTTAEELYFSTTAVCITEVIKLLISVGLLAKETGSLGRFKASLSENVLGSPKELAKLSVPSLVYAVQNNMAFLALSNLDAAVYQVTYQLKIPCTALCTVLMLNRTLSKLQWISVFMLCGGVTLVQWKPAQATKVVVAQNPLLGFGAIAIAVLCSGFAGVYFEKVLKSSDTSLWVRNIQMYLSGIVVTLAGTYLSDGAEIQEKGFFYGYTYYVWFVIFLASVGGLYTSVVVKYTDNIMKGFSAAAAIVLSTIASVLLFGLQITLSFALGALLVCVSIYLYGLPRQDTTSIQQEATSKERIIGV.

The Cytoplasmic segment spans residues 1-9 (MAPARENVS). The chain crosses the membrane as a helical span at residues 10-30 (LFFKLYCLTVMTLVAAAYTVA). Residues 31–45 (LRYTRTTAEELYFST) lie on the Lumenal side of the membrane. The helical transmembrane segment at 46 to 64 (TAVCITEVIKLLISVGLLA) threads the bilayer. Lys-55 is a CMP-N-acetyl-beta-neuraminate binding site. Over 65-87 (KETGSLGRFKASLSENVLGSPKE) the chain is Cytoplasmic. The chain crosses the membrane as a helical span at residues 88–108 (LAKLSVPSLVYAVQNNMAFLA). 101–102 (QN) lines the CMP-N-acetyl-beta-neuraminate pocket. The Lumenal segment spans residues 109-114 (LSNLDA). A helical transmembrane segment spans residues 115–135 (AVYQVTYQLKIPCTALCTVLM). 117 to 124 (YQVTYQLK) is a binding site for CMP-N-acetyl-beta-neuraminate. Topologically, residues 136-141 (LNRTLS) are cytoplasmic. Residues 142–160 (KLQWISVFMLCGGVTLVQW) form a helical membrane-spanning segment. The Lumenal segment spans residues 161–175 (KPAQATKVVVAQNPL). The helical transmembrane segment at 176-196 (LGFGAIAIAVLCSGFAGVYFE) threads the bilayer. Ser-188 is a binding site for CMP-N-acetyl-beta-neuraminate. Over 197-209 (KVLKSSDTSLWVR) the chain is Cytoplasmic. 210 to 214 (NIQMY) lines the CMP-N-acetyl-beta-neuraminate pocket. The chain crosses the membrane as a helical span at residues 210–228 (NIQMYLSGIVVTLAGTYLS). Residues 229 to 243 (DGAEIQEKGFFYGYT) lie on the Lumenal side of the membrane. A helical membrane pass occupies residues 244 to 262 (YYVWFVIFLASVGGLYTSV). Residues 263–269 (VVKYTDN) are Cytoplasmic-facing. The chain crosses the membrane as a helical span at residues 270 to 288 (IMKGFSAAAAIVLSTIASV). Position 272 (Lys-272) interacts with CMP-N-acetyl-beta-neuraminate. Over 289-296 (LLFGLQIT) the chain is Lumenal. The chain crosses the membrane as a helical span at residues 297–315 (LSFALGALLVCVSIYLYGL). Topologically, residues 316 to 336 (PRQDTTSIQQEATSKERIIGV) are cytoplasmic. Residues 316-336 (PRQDTTSIQQEATSKERIIGV) form a disordered region.

It belongs to the nucleotide-sugar transporter family. SLC35A subfamily. Monomer. As to expression, ubiquitous. Found in all the tissues examined including skeletal muscle, brain, heart, liver, kidney and spleen.

The protein localises to the golgi apparatus membrane. The enzyme catalyses CMP-N-acetyl-beta-neuraminate(in) + CMP(out) = CMP-N-acetyl-beta-neuraminate(out) + CMP(in). The catalysed reaction is CMP-N-acetyl-beta-neuraminate(in) + AMP(out) = CMP-N-acetyl-beta-neuraminate(out) + AMP(in). It carries out the reaction CDP-L-ribitol(in) + CDP(out) = CDP-L-ribitol(out) + CDP(in). It catalyses the reaction UMP(out) + CMP-N-acetyl-beta-neuraminate(in) = UMP(in) + CMP-N-acetyl-beta-neuraminate(out). Functionally, transports CMP-sialic acid from the cytosol into the Golgi apparatus, functioning as an antiporter that exchanges CMP-sialic acid for CMP. Binds both CMP-sialic acid and free CMP, but has higher affinity for free CMP. Also able to exchange CMP-sialic acid for AMP and UMP. Also mediates the transport of CDP-ribitol. The chain is CMP-sialic acid transporter from Mus musculus (Mouse).